The primary structure comprises 372 residues: F-box/kelch-repeat protein At5g48990 (372 aa).

Residues 14-60 (SSPNPSLPEDLIVSILARVSRSYYTNLSVVSKTFRSILTSPELYKTR) enclose the F-box domain. The stretch at 176 to 222 (RTYFPGSSEKPDSLNCVEVYNTNTQTWNPVPPQKRKLKFGNMEGKIY) is one Kelch repeat.

The sequence is that of F-box/kelch-repeat protein At5g48990 from Arabidopsis thaliana (Mouse-ear cress).